A 106-amino-acid chain; its full sequence is DNA-directed RNA polymerase subunit Rpo6 (106 aa).

Belongs to the archaeal Rpo6/eukaryotic RPB6 RNA polymerase subunit family. As to quaternary structure, part of the RNA polymerase complex.

It localises to the cytoplasm. It carries out the reaction RNA(n) + a ribonucleoside 5'-triphosphate = RNA(n+1) + diphosphate. Functionally, DNA-dependent RNA polymerase (RNAP) catalyzes the transcription of DNA into RNA using the four ribonucleoside triphosphates as substrates. The polypeptide is DNA-directed RNA polymerase subunit Rpo6 (Pyrobaculum aerophilum (strain ATCC 51768 / DSM 7523 / JCM 9630 / CIP 104966 / NBRC 100827 / IM2)).